Reading from the N-terminus, the 726-residue chain is Probable alpha-galactosidase G (726 aa).

N-linked (GlcNAc...) asparagine glycans are attached at residues Asn23, Asn166, and Asn456. The Nucleophile role is filled by Asp485. The Proton donor role is filled by Asp547. N-linked (GlcNAc...) asparagine glycans are attached at residues Asn657 and Asn673.

It belongs to the glycosyl hydrolase 36 family. As to quaternary structure, homotetramer. It depends on Mg(2+) as a cofactor. NAD(+) is required as a cofactor.

It is found in the secreted. It carries out the reaction Hydrolysis of terminal, non-reducing alpha-D-galactose residues in alpha-D-galactosides, including galactose oligosaccharides, galactomannans and galactolipids.. Functionally, hydrolyzes a variety of simple alpha-D-galactoside as well as more complex molecules such as oligosaccharides and polysaccharides. Not active on paranitrophenyl-alpha-galactoside and raffinose. This Emericella nidulans (strain FGSC A4 / ATCC 38163 / CBS 112.46 / NRRL 194 / M139) (Aspergillus nidulans) protein is Probable alpha-galactosidase G (aglG).